A 508-amino-acid chain; its full sequence is MGCCCSSDYDEDWIENIDICEHCNYPIDPDSKRQQLIRNVSEVRDPLVSYEAMSPPCSPLQDKLVVALYDYEPTHDGDLGLKQGEKLRVLEESGEWWRAQSLTTGQEGLIPHNFVAMVNSLEPEPWFFKNLSRKNAEARLLASGNTHGSFLIRESETSKGSYSLSVRDFDQNQGETVKHYKIRNMDNGGYYISPRVTFSSLHELVEYYSSSSDGLCTRLGKPCRTQKPQKPWWQDEWEVPRESLKLVEKLGAGQFGEVWMGFYNGHTKVAIKNLKQGSMSPSAFLAEANLMKNLQHPRLVRLYAVVTKEPIYIITEYMEKGSLVDFLKTSEGIKLSINKLLDMAAQIAEGMAFIEAKNYIHRDLRAANILVSEALCCKIADFGLARLIEDNEYTAREGAKFPIKWTAPEAINYGTFTIKSDVWSFGILLTEIVTYGRIPYPGMTNPEVIQNLERGYRMPQPDNCPQELYELMMQCWKEQPEERPTFEYMKSVLEDFFTATEGQYQQQP.

A lipid anchor (N-myristoyl glycine) is attached at Gly2. Residues Cys3 and Cys5 are each lipidated (S-palmitoyl cysteine). The SH3 domain maps to 60–120; sequence LQDKLVVALY…PHNFVAMVNS (61 aa). One can recognise an SH2 domain in the interval 126–223; the sequence is WFFKNLSRKN…GLCTRLGKPC (98 aa). The Protein kinase domain maps to 244–497; the sequence is LKLVEKLGAG…YMKSVLEDFF (254 aa). ATP contacts are provided by residues 250–258 and Lys272; that span reads LGAGQFGEV. Asp363 acts as the Proton acceptor in catalysis. Position 393 is a phosphotyrosine; by autocatalysis (Tyr393). Residue Tyr504 is modified to Phosphotyrosine.

It belongs to the protein kinase superfamily. Tyr protein kinase family. SRC subfamily. Binds to the cytoplasmic domain of cell surface receptors, such as CD4, CD8. In terms of processing, phosphorylated on Tyr-393, which increases enzymatic activity, this site is dephosphorylated by PTN22. Phosphorylated on Tyr-504, presumably by CSK, which decreases activity. Dephosphorylated by PTPRC/CD45. Dephosphorylation at Tyr-393 by PTPN2 negatively regulates T-cells differentiation. Palmitoylation regulates association with the plasma membrane.

It is found in the cell membrane. The protein localises to the cytoplasm. The protein resides in the cytosol. It carries out the reaction L-tyrosyl-[protein] + ATP = O-phospho-L-tyrosyl-[protein] + ADP + H(+). With respect to regulation, inhibited by tyrosine phosphorylation. Its function is as follows. Tyrosine kinase that plays an essential role for the selection and maturation of developing T-cell in the thymus and in mature T-cell function. Is constitutively associated with the cytoplasmic portions of the CD4 and CD8 surface receptors and plays a key role in T-cell antigen receptor(TCR)-linked signal transduction pathways. In Gallus gallus (Chicken), this protein is Proto-oncogene tyrosine-protein kinase LCK (LCK).